We begin with the raw amino-acid sequence, 402 residues long: MSLEGIGFGYRERAPYASNPAFSRGRLVPEPESPTRTPFQRDRDRIIHSTAFRRLKHKTQVFIAHEGDHYRTRLTHTIEVAQIARALARALRLDEDLAEAVALVHDFGHTPFGHTGEDALNERMKNFGGFDHNAQSLRIVTKLEHRYADFDGLNLSWETLEGLVKHNGPLLGPYAAHPDIPVPQPILDFNARYDLELSRFASLEAQCAAIADDIAYNAHDIDDGLRAGLLTLESLDEVPLAKRLLDIVRTRYPNLDPVRTGHELVRRQITIMVEDVIEEAQRRLASARPGTMEDVHNQPRALVGFSDAMRAEEKVLKRFLFKNLYFHESVVVRRHAADRIVQDLFDACFTDPSLMPDEWRLGCEALDKAALARRVADYLAGMTDNYAVREHRRLFDRTPDLA.

The tract at residues 20–39 (PAFSRGRLVPEPESPTRTPF) is disordered. One can recognise an HD domain in the interval 73–217 (RLTHTIEVAQ…AAIADDIAYN (145 aa)).

The protein belongs to the dGTPase family. Type 2 subfamily.

The protein is Deoxyguanosinetriphosphate triphosphohydrolase-like protein of Brucella canis (strain ATCC 23365 / NCTC 10854 / RM-666).